A 243-amino-acid polypeptide reads, in one-letter code: Protein-L-isoaspartate O-methyltransferase (243 aa).

The active site involves serine 87.

The protein belongs to the methyltransferase superfamily. L-isoaspartyl/D-aspartyl protein methyltransferase family.

Its subcellular location is the cytoplasm. It catalyses the reaction [protein]-L-isoaspartate + S-adenosyl-L-methionine = [protein]-L-isoaspartate alpha-methyl ester + S-adenosyl-L-homocysteine. In terms of biological role, catalyzes the methyl esterification of L-isoaspartyl residues in peptides and proteins that result from spontaneous decomposition of normal L-aspartyl and L-asparaginyl residues. It plays a role in the repair and/or degradation of damaged proteins. The polypeptide is Protein-L-isoaspartate O-methyltransferase (Methanosarcina mazei (strain ATCC BAA-159 / DSM 3647 / Goe1 / Go1 / JCM 11833 / OCM 88) (Methanosarcina frisia)).